The sequence spans 197 residues: Holliday junction branch migration complex subunit RuvA (197 aa).

The tract at residues 1-64 (MIARLAGKVA…QDAIELYGFA (64 aa)) is domain I. The segment at 65-141 (SEDEEAVFRA…LALLARAAGP (77 aa)) is domain II. A flexible linker region spans residues 141-145 (PARAK). Residues 146–197 (PGAGVVEQLRQALVNLGYKPPQADAAADALRDEAEGKKLDELLREALKRLRG) form a domain III region.

It belongs to the RuvA family. In terms of assembly, homotetramer. Forms an RuvA(8)-RuvB(12)-Holliday junction (HJ) complex. HJ DNA is sandwiched between 2 RuvA tetramers; dsDNA enters through RuvA and exits via RuvB. An RuvB hexamer assembles on each DNA strand where it exits the tetramer. Each RuvB hexamer is contacted by two RuvA subunits (via domain III) on 2 adjacent RuvB subunits; this complex drives branch migration. In the full resolvosome a probable DNA-RuvA(4)-RuvB(12)-RuvC(2) complex forms which resolves the HJ.

Its subcellular location is the cytoplasm. Functionally, the RuvA-RuvB-RuvC complex processes Holliday junction (HJ) DNA during genetic recombination and DNA repair, while the RuvA-RuvB complex plays an important role in the rescue of blocked DNA replication forks via replication fork reversal (RFR). RuvA specifically binds to HJ cruciform DNA, conferring on it an open structure. The RuvB hexamer acts as an ATP-dependent pump, pulling dsDNA into and through the RuvAB complex. HJ branch migration allows RuvC to scan DNA until it finds its consensus sequence, where it cleaves and resolves the cruciform DNA. This chain is Holliday junction branch migration complex subunit RuvA, found in Anaeromyxobacter sp. (strain Fw109-5).